Here is a 300-residue protein sequence, read N- to C-terminus: uncharacterized protein (300 aa).

4 consecutive CBS domains span residues 10–68 (RFPP…FRDV), 88–148 (FLKY…HVKV), 152–207 (MTSE…EDVL), and 226–284 (ISSK…GVEI).

This is an uncharacterized protein from Thermofilum pendens.